A 183-amino-acid polypeptide reads, in one-letter code: MKGGKRAQQPAKQNAHRLNGEIIGVKEVRLTGLDGESVGVVSLNEALDVALTAGVDLVEISPNAEPPVCRVMDYGKFLFEKAKAAKEQKKKQKQVQTKEIKFRPGTDIGDYQVKLRNLTGFLEEGNKVKVTIRFRGREMAHQNIGVDVLNRLKADTEEFAVVESFPTRIEGRQMIMVLAPKKK.

This sequence belongs to the IF-3 family. As to quaternary structure, monomer.

It is found in the cytoplasm. Functionally, IF-3 binds to the 30S ribosomal subunit and shifts the equilibrium between 70S ribosomes and their 50S and 30S subunits in favor of the free subunits, thus enhancing the availability of 30S subunits on which protein synthesis initiation begins. This is Translation initiation factor IF-3 from Aliivibrio salmonicida (strain LFI1238) (Vibrio salmonicida (strain LFI1238)).